Reading from the N-terminus, the 166-residue chain is Regulatory protein RecX (166 aa).

It belongs to the RecX family.

The protein resides in the cytoplasm. In terms of biological role, modulates RecA activity. The polypeptide is Regulatory protein RecX (Escherichia coli (strain K12 / MC4100 / BW2952)).